The sequence spans 482 residues: Glutamate synthase [NADPH] small chain (482 aa).

Residues 39-72 (ERANEQANRCSQCGVPFCQVHCPVSNNIPDWLKL) enclose the 4Fe-4S ferredoxin-type domain. Residues cysteine 95, cysteine 99, cysteine 105, and cysteine 109 each coordinate [4Fe-4S] cluster.

Aggregate of 4 catalytic active heterodimers, consisting of a large and a small subunit. The cofactor is [4Fe-4S] cluster.

It catalyses the reaction 2 L-glutamate + NADP(+) = L-glutamine + 2-oxoglutarate + NADPH + H(+). It participates in amino-acid biosynthesis; L-glutamate biosynthesis via GLT pathway; L-glutamate from 2-oxoglutarate and L-glutamine (NADP(+) route): step 1/1. The protein operates within energy metabolism; nitrogen metabolism. This Azospirillum brasilense protein is Glutamate synthase [NADPH] small chain (gltD).